Here is an 86-residue protein sequence, read N- to C-terminus: Large ribosomal subunit protein uL23 (86 aa).

Belongs to the universal ribosomal protein uL23 family. As to quaternary structure, part of the 50S ribosomal subunit. Contacts protein L29.

In terms of biological role, binds to 23S rRNA. One of the proteins that surrounds the polypeptide exit tunnel on the outside of the ribosome. The sequence is that of Large ribosomal subunit protein uL23 from Aeropyrum pernix (strain ATCC 700893 / DSM 11879 / JCM 9820 / NBRC 100138 / K1).